The primary structure comprises 131 residues: uncharacterized protein (131 aa).

Residues 14–130 form the MSP domain; sequence FLLIYSSLEV…RRLPASFLST (117 aa).

This is an uncharacterized protein from Caenorhabditis elegans.